Consider the following 483-residue polypeptide: Glutamyl-tRNA(Gln) amidotransferase subunit A (483 aa).

Catalysis depends on charge relay system residues Lys76 and Ser151. Ser175 (acyl-ester intermediate) is an active-site residue.

It belongs to the amidase family. GatA subfamily. In terms of assembly, heterotrimer of A, B and C subunits.

It catalyses the reaction L-glutamyl-tRNA(Gln) + L-glutamine + ATP + H2O = L-glutaminyl-tRNA(Gln) + L-glutamate + ADP + phosphate + H(+). In terms of biological role, allows the formation of correctly charged Gln-tRNA(Gln) through the transamidation of misacylated Glu-tRNA(Gln) in organisms which lack glutaminyl-tRNA synthetase. The reaction takes place in the presence of glutamine and ATP through an activated gamma-phospho-Glu-tRNA(Gln). The chain is Glutamyl-tRNA(Gln) amidotransferase subunit A from Chromobacterium violaceum (strain ATCC 12472 / DSM 30191 / JCM 1249 / CCUG 213 / NBRC 12614 / NCIMB 9131 / NCTC 9757 / MK).